The chain runs to 251 residues: Ubiquinone/menaquinone biosynthesis C-methyltransferase UbiE (251 aa).

Residues T74, D95, 123-124, and S140 each bind S-adenosyl-L-methionine; that span reads NA.

It belongs to the class I-like SAM-binding methyltransferase superfamily. MenG/UbiE family.

It carries out the reaction a 2-demethylmenaquinol + S-adenosyl-L-methionine = a menaquinol + S-adenosyl-L-homocysteine + H(+). It catalyses the reaction a 2-methoxy-6-(all-trans-polyprenyl)benzene-1,4-diol + S-adenosyl-L-methionine = a 5-methoxy-2-methyl-3-(all-trans-polyprenyl)benzene-1,4-diol + S-adenosyl-L-homocysteine + H(+). It participates in quinol/quinone metabolism; menaquinone biosynthesis; menaquinol from 1,4-dihydroxy-2-naphthoate: step 2/2. It functions in the pathway cofactor biosynthesis; ubiquinone biosynthesis. In terms of biological role, methyltransferase required for the conversion of demethylmenaquinol (DMKH2) to menaquinol (MKH2) and the conversion of 2-polyprenyl-6-methoxy-1,4-benzoquinol (DDMQH2) to 2-polyprenyl-3-methyl-6-methoxy-1,4-benzoquinol (DMQH2). This is Ubiquinone/menaquinone biosynthesis C-methyltransferase UbiE from Yersinia pestis bv. Antiqua (strain Angola).